A 61-amino-acid chain; its full sequence is Small ribosomal subunit protein uS14 (61 aa).

Positions 24, 27, 40, and 43 each coordinate Zn(2+).

This sequence belongs to the universal ribosomal protein uS14 family. Zinc-binding uS14 subfamily. In terms of assembly, part of the 30S ribosomal subunit. Contacts proteins S3 and S10. Requires Zn(2+) as cofactor.

Binds 16S rRNA, required for the assembly of 30S particles and may also be responsible for determining the conformation of the 16S rRNA at the A site. The sequence is that of Small ribosomal subunit protein uS14 from Bifidobacterium adolescentis (strain ATCC 15703 / DSM 20083 / NCTC 11814 / E194a).